A 302-amino-acid chain; its full sequence is Cell division protein FtsQ (302 aa).

Topologically, residues 1-43 (MRPVDKKPVDRKIERETRYLRRDPAPSRWSYRYQRLMLTPAFR) are cytoplasmic. A helical membrane pass occupies residues 44 to 64 (AGVRLGTPVIIIALAVAVVFG). Over 65–302 (RADSRDWIMG…SMPGRSAGRG (238 aa)) the chain is Periplasmic. A POTRA domain is found at 89–156 (FMVGSFAITG…GVLQIVIEER (68 aa)).

It belongs to the FtsQ/DivIB family. FtsQ subfamily.

It localises to the cell inner membrane. Its function is as follows. Essential cell division protein. This Ketogulonicigenium vulgare (strain Y25) protein is Cell division protein FtsQ.